The chain runs to 95 residues: Large ribosomal subunit protein bL25 (95 aa).

This sequence belongs to the bacterial ribosomal protein bL25 family. In terms of assembly, part of the 50S ribosomal subunit; part of the 5S rRNA/L5/L18/L25 subcomplex. Contacts the 5S rRNA. Binds to the 5S rRNA independently of L5 and L18.

Its function is as follows. This is one of the proteins that binds to the 5S RNA in the ribosome where it forms part of the central protuberance. The sequence is that of Large ribosomal subunit protein bL25 from Shewanella sp. (strain ANA-3).